We begin with the raw amino-acid sequence, 352 residues long: UDP-3-O-acylglucosamine N-acyltransferase (352 aa).

H242 acts as the Proton acceptor in catalysis.

Belongs to the transferase hexapeptide repeat family. LpxD subfamily. Homotrimer.

The catalysed reaction is a UDP-3-O-[(3R)-3-hydroxyacyl]-alpha-D-glucosamine + a (3R)-hydroxyacyl-[ACP] = a UDP-2-N,3-O-bis[(3R)-3-hydroxyacyl]-alpha-D-glucosamine + holo-[ACP] + H(+). Its pathway is bacterial outer membrane biogenesis; LPS lipid A biosynthesis. Functionally, catalyzes the N-acylation of UDP-3-O-acylglucosamine using 3-hydroxyacyl-ACP as the acyl donor. Is involved in the biosynthesis of lipid A, a phosphorylated glycolipid that anchors the lipopolysaccharide to the outer membrane of the cell. The chain is UDP-3-O-acylglucosamine N-acyltransferase from Alkalilimnicola ehrlichii (strain ATCC BAA-1101 / DSM 17681 / MLHE-1).